Consider the following 432-residue polypeptide: MTESDVAESIGDIVSRLNNALDDLETKKNQTPSVLKGPTVSQERPSAPYRQKIEKLSAEVVDSNPYSRLMALQRMGIVRDYEQIRDKTVAVVGVGGVGSVVAEMLTRCGIGKLILFDYDKVEIANMNRLFYQPNQAGLSKVEAARDTLIHVNPDVQIEVHNFNITTMDNFDVFVGRIRNGSLKSGKIDLVLSCVDNFEARMAVNMACNEENQIWMESGVSENAVSGHIQYIEPGKTACFACVPPLVVASNIDERTLKREGVCAASLPTTMAVVAGFLVMNTLKYLLNFGEVSHYVGYNALADFFPRESIKPNPSCDDRHCQIRQKEYEEKISSEPITLDIQAPEDEPIIHEENDWGIEVVDSDTTEAPSSSAATEVAPGLKFAYEPTQTPKKNSSDNLKLSPSQAVTKEWMENIRDALLEEDRLKKEQNKRK.

The interval 25-47 (ETKKNQTPSVLKGPTVSQERPSA) is disordered. Residues 29–44 (NQTPSVLKGPTVSQER) are compositionally biased toward polar residues. G96, D117, K140, N163, and N196 together coordinate ATP. The Zn(2+) site is built by C238 and C241. C262 acts as the Glycyl thioester intermediate in catalysis. Residues C315 and C320 each coordinate Zn(2+). The tract at residues 363–406 (DTTEAPSSSAATEVAPGLKFAYEPTQTPKKNSSDNLKLSPSQAV) is disordered. Positions 386–406 (PTQTPKKNSSDNLKLSPSQAV) are enriched in polar residues.

The protein belongs to the ubiquitin-activating E1 family. UBA5 subfamily. In terms of assembly, interacts with ufc-1.

In terms of biological role, E1-like enzyme which activates ufm-1. Required for interaction between ufm-1 and ufc-1. This Caenorhabditis briggsae protein is Ubiquitin-like modifier-activating enzyme 5.